The primary structure comprises 156 residues: Small ribosomal subunit protein uS7 (156 aa).

This sequence belongs to the universal ribosomal protein uS7 family. In terms of assembly, part of the 30S ribosomal subunit. Contacts proteins S9 and S11.

One of the primary rRNA binding proteins, it binds directly to 16S rRNA where it nucleates assembly of the head domain of the 30S subunit. Is located at the subunit interface close to the decoding center, probably blocks exit of the E-site tRNA. The polypeptide is Small ribosomal subunit protein uS7 (Nitratidesulfovibrio vulgaris (strain DSM 19637 / Miyazaki F) (Desulfovibrio vulgaris)).